The sequence spans 283 residues: Glutamate racemase (283 aa).

Substrate-binding positions include 7-8 (DS) and 39-40 (YG). Cys70 acts as the Proton donor/acceptor in catalysis. 71 to 72 (NT) serves as a coordination point for substrate. Residue Cys206 is the Proton donor/acceptor of the active site. 207–208 (TH) lines the substrate pocket.

It belongs to the aspartate/glutamate racemases family.

The catalysed reaction is L-glutamate = D-glutamate. It functions in the pathway cell wall biogenesis; peptidoglycan biosynthesis. Functionally, provides the (R)-glutamate required for cell wall biosynthesis. In Caulobacter sp. (strain K31), this protein is Glutamate racemase.